The chain runs to 164 residues: NADH-quinone oxidoreductase subunit I (164 aa).

2 consecutive 4Fe-4S ferredoxin-type domains span residues leucine 54–glycine 84 and valine 95–asparagine 124. [4Fe-4S] cluster is bound by residues cysteine 64, cysteine 67, cysteine 70, cysteine 74, cysteine 104, cysteine 107, cysteine 110, and cysteine 114.

It belongs to the complex I 23 kDa subunit family. In terms of assembly, NDH-1 is composed of 14 different subunits. Subunits NuoA, H, J, K, L, M, N constitute the membrane sector of the complex. [4Fe-4S] cluster is required as a cofactor.

It is found in the cell inner membrane. It carries out the reaction a quinone + NADH + 5 H(+)(in) = a quinol + NAD(+) + 4 H(+)(out). Functionally, NDH-1 shuttles electrons from NADH, via FMN and iron-sulfur (Fe-S) centers, to quinones in the respiratory chain. The immediate electron acceptor for the enzyme in this species is believed to be ubiquinone. Couples the redox reaction to proton translocation (for every two electrons transferred, four hydrogen ions are translocated across the cytoplasmic membrane), and thus conserves the redox energy in a proton gradient. The protein is NADH-quinone oxidoreductase subunit I of Mesorhizobium japonicum (strain LMG 29417 / CECT 9101 / MAFF 303099) (Mesorhizobium loti (strain MAFF 303099)).